A 261-amino-acid chain; its full sequence is Phosphatidylglycerol--prolipoprotein diacylglyceryl transferase (261 aa).

3 helical membrane passes run 20–40 (LAIHWYAIFIVGGAALAVWLA), 54–74 (IIDFVLFAFPLGIVGARLYYV), and 88–108 (IIAIWDGGGAIYGSLIAGAIV). Position 139 (Arg-139) interacts with a 1,2-diacyl-sn-glycero-3-phospho-(1'-sn-glycerol). Helical transmembrane passes span 175-195 (MPTFLFESIGTLSGFILVMVF) and 235-255 (ARVSQWLSVLLVILGIILFVY).

The protein belongs to the Lgt family.

The protein localises to the cell membrane. It carries out the reaction L-cysteinyl-[prolipoprotein] + a 1,2-diacyl-sn-glycero-3-phospho-(1'-sn-glycerol) = an S-1,2-diacyl-sn-glyceryl-L-cysteinyl-[prolipoprotein] + sn-glycerol 1-phosphate + H(+). The protein operates within protein modification; lipoprotein biosynthesis (diacylglyceryl transfer). Catalyzes the transfer of the diacylglyceryl group from phosphatidylglycerol to the sulfhydryl group of the N-terminal cysteine of a prolipoprotein, the first step in the formation of mature lipoproteins. In Lactococcus lactis subsp. cremoris (strain MG1363), this protein is Phosphatidylglycerol--prolipoprotein diacylglyceryl transferase.